A 353-amino-acid polypeptide reads, in one-letter code: Ferrochelatase (353 aa).

His-223 and Glu-304 together coordinate Fe cation.

The protein belongs to the ferrochelatase family.

It localises to the cytoplasm. The catalysed reaction is heme b + 2 H(+) = protoporphyrin IX + Fe(2+). It functions in the pathway porphyrin-containing compound metabolism; protoheme biosynthesis; protoheme from protoporphyrin-IX: step 1/1. Its function is as follows. Catalyzes the ferrous insertion into protoporphyrin IX. The chain is Ferrochelatase from Mesorhizobium japonicum (strain LMG 29417 / CECT 9101 / MAFF 303099) (Mesorhizobium loti (strain MAFF 303099)).